A 454-amino-acid polypeptide reads, in one-letter code: Dihydrolipoyllysine-residue succinyltransferase component of 2-oxoglutarate dehydrogenase complex, mitochondrial (454 aa).

A mitochondrion-targeting transit peptide spans 1–68 (MLSRSRCVSR…RFFQTTAVCK (68 aa)). The Lipoyl-binding domain maps to 71 to 145 (VITVQTPAFA…EGGTPLFTLR (75 aa)). Position 82 is a phosphoserine (serine 82). Position 111 is an N6-lipoyllysine (lysine 111). Residues 147-227 (TGAAPAKAKP…KGLRSEHREK (81 aa)) are disordered. The segment covering 149–163 (AAPAKAKPAETPAPA) has biased composition (low complexity). Lysine 155 is subject to N6-acetyllysine. A compositionally biased stretch (pro residues) spans 186-197 (PPVPSPSQPPSS). The segment covering 198-217 (KPVSAIKPTAAPPLAEAGAA) has biased composition (low complexity). Residues lysine 268, lysine 273, lysine 274, lysine 278, and lysine 308 each carry the N6-acetyllysine modification. Active-site residues include histidine 425 and aspartate 429.

This sequence belongs to the 2-oxoacid dehydrogenase family. As to quaternary structure, the 2-oxoglutarate dehydrogenase complex is composed of OGDH (2-oxoglutarate dehydrogenase; E1), DLST (dihydrolipoamide succinyltransferase; E2), DLD (dihydrolipoamide dehydrogenase; E3) and the assembly factor KGD4. It contains multiple copies of the three enzymatic components (E1, E2 and E3). In the nucleus, the 2-oxoglutarate dehydrogenase complex associates with KAT2A. Interacts with ABHD11; this interaction maintains the functional lipoylation of the 2-oxoglutarate dehydrogenase complex. (R)-lipoate serves as cofactor.

Its subcellular location is the mitochondrion matrix. The protein resides in the nucleus. It carries out the reaction N(6)-[(R)-dihydrolipoyl]-L-lysyl-[protein] + succinyl-CoA = N(6)-[(R)-S(8)-succinyldihydrolipoyl]-L-lysyl-[protein] + CoA. It functions in the pathway amino-acid degradation; L-lysine degradation via saccharopine pathway; glutaryl-CoA from L-lysine: step 6/6. It participates in carbohydrate metabolism; tricarboxylic acid cycle. Dihydrolipoamide succinyltransferase (E2) component of the 2-oxoglutarate dehydrogenase complex. The 2-oxoglutarate dehydrogenase complex catalyzes the overall conversion of 2-oxoglutarate to succinyl-CoA and CO(2). The 2-oxoglutarate dehydrogenase complex is mainly active in the mitochondrion. A fraction of the 2-oxoglutarate dehydrogenase complex also localizes in the nucleus and is required for lysine succinylation of histones: associates with KAT2A on chromatin and provides succinyl-CoA to histone succinyltransferase KAT2A. This is Dihydrolipoyllysine-residue succinyltransferase component of 2-oxoglutarate dehydrogenase complex, mitochondrial from Mus musculus (Mouse).